The chain runs to 717 residues: Cleavage stimulation factor subunit 3 (717 aa).

Residue Ser2 is modified to N-acetylserine. HAT repeat units follow at residues 45–77, 79–110, 117–152, 163–196, 221–261, 271–303, 319–352, 354–387, and 458–494; these read QPID…AEIK, KNYD…YVRE, SYKE…FLKG, QRIT…YEEG, KEYE…WEKS, LITK…YLEQ, LFSD…YEES, MKYE…FARR, and NEDN…FESN. Residues 684-705 are disordered; that stretch reads VKRPNEDSDEDEEKGAVVPPVH. Ser691 bears the Phosphoserine mark.

In terms of assembly, homodimer. The CSTF complex is composed of CSTF1 (50 kDa subunit), CSTF2 (64 kDa subunit) and CSTF3 (77 kDa subunit). CSTF3 directly interacts with CSTF1 and CSTF2. Interacts with FIP1L1.

The protein resides in the nucleus. In terms of biological role, one of the multiple factors required for polyadenylation and 3'-end cleavage of mammalian pre-mRNAs. The sequence is that of Cleavage stimulation factor subunit 3 (CSTF3) from Homo sapiens (Human).